A 433-amino-acid chain; its full sequence is Homoserine O-acetyltransferase (433 aa).

In terms of domain architecture, AB hydrolase-1 spans 41 to 385 (NVVLVCHALT…HGHDAFLVEP (345 aa)). A disordered region spans residues 55–74 (VARSPAPERNEGTRGAGQAG). The active-site Nucleophile is the Ser166. Residue Arg237 coordinates substrate. Active-site residues include Asp345 and His378. Asp379 provides a ligand contact to substrate. The segment at 403–433 (RAVSDDGGGGGNDSARPERDHAPVHASLFKG) is disordered.

The protein belongs to the AB hydrolase superfamily. MetX family. As to quaternary structure, homodimer.

It localises to the cytoplasm. It catalyses the reaction L-homoserine + acetyl-CoA = O-acetyl-L-homoserine + CoA. The protein operates within amino-acid biosynthesis; L-methionine biosynthesis via de novo pathway; O-acetyl-L-homoserine from L-homoserine: step 1/1. Transfers an acetyl group from acetyl-CoA to L-homoserine, forming acetyl-L-homoserine. The protein is Homoserine O-acetyltransferase of Halorubrum lacusprofundi (strain ATCC 49239 / DSM 5036 / JCM 8891 / ACAM 34).